A 188-amino-acid chain; its full sequence is Threonylcarbamoyl-AMP synthase (188 aa).

The region spanning 3–188 (QLHPSDIKDI…RSGKILRNGQ (186 aa)) is the YrdC-like domain.

It belongs to the SUA5 family. TsaC subfamily.

It is found in the cytoplasm. The catalysed reaction is L-threonine + hydrogencarbonate + ATP = L-threonylcarbamoyladenylate + diphosphate + H2O. Its function is as follows. Required for the formation of a threonylcarbamoyl group on adenosine at position 37 (t(6)A37) in tRNAs that read codons beginning with adenine. Catalyzes the conversion of L-threonine, HCO(3)(-)/CO(2) and ATP to give threonylcarbamoyl-AMP (TC-AMP) as the acyladenylate intermediate, with the release of diphosphate. The sequence is that of Threonylcarbamoyl-AMP synthase from Shewanella baltica (strain OS195).